Reading from the N-terminus, the 441-residue chain is Myocyte-specific enhancer factor 2C (441 aa).

In terms of domain architecture, MADS-box spans 1–61 (MGRKKIQITR…NKLFQYASTD (61 aa)). K4 is modified (N6-acetyllysine). The segment at residues 58-86 (ASTDMDKVLLKYTEYNEPHESRTNSDIVE) is a DNA-binding region (mef2-type). Phosphoserine; by CK2 is present on S59. The tract at residues 91-116 (KGLNGCDSPDPDADDSVGHSPESEDK) is disordered. S98, S106, and S110 each carry phosphoserine. N6-acetyllysine is present on residues K116 and K119. Residues 180 to 224 (NSMSPGVTHRPPSAGNTGGLMGGDLTSGAGTSAGNGYGNPRNSPG) form a disordered region. A phosphoserine mark is found at S222 and S228. K234 and K239 each carry N6-acetyllysine. S240 is modified (phosphoserine). K252 and K264 each carry N6-acetyllysine. The interval 271 to 278 (SEDVDLLL) is beta domain. Residues T293 and T300 each carry the phosphothreonine; by MAPK7 and MAPK14 modification. The tract at residues 353-441 (QHLHSMPPSA…RMRLSEGWAT (89 aa)) is disordered. The span at 362 to 377 (ALSQLGDRTTTPSRYP) shows a compositional bias: polar residues. S387 bears the Phosphoserine; by MAPK7 mark. Over residues 387–400 (SPVDSLSSCSSSYD) the composition is skewed to low complexity. Positions 401 to 411 (GSDREDHRNEF) are enriched in basic and acidic residues. A Phosphoserine modification is found at S413.

Belongs to the MEF2 family. As to quaternary structure, forms a complex with class II HDACs in undifferentiating cells. On myogenic differentiation, HDACs are released into the cytoplasm allowing MEF2s to interact with other proteins for activation. Interacts with EP300 in differentiating cells; the interaction acetylates MEF2C leading to increased DNA binding and activation. Interacts with HDAC7 and CARM1. Interacts with HDAC4, HDAC7 and HDAC9; the interaction with HDACs represses transcriptional activity. Interacts with LPIN1. Interacts with MYOCD. Interacts with AKAP13. Interacts with FOXK1; the interaction inhibits MEF2C transactivation activity. Interacts (via N-terminus) with HABP4; this interaction decreases DNA-binding activity of MEF2C in myocardial cells in response to mechanical stress. Interacts with JPH2; interaction specifically takes place with the Junctophilin-2 N-terminal fragment cleavage product of JPH2. Interacts (via MADS box) with SOX18. Interacts with PHF7; the interaction promotes MEF2C binding to its transcription targets. In terms of processing, phosphorylation on Ser-59 enhances DNA binding activity. Post-translationally, acetylated by p300 on several sites in diffentiating myocytes. Acetylation on Lys-4 increases DNA binding and transactivation. Proteolytically cleaved in cerebellar granule neurons, probably by caspase 7, following neurotoxicity.

The protein resides in the nucleus. It localises to the cytoplasm. It is found in the sarcoplasm. Functionally, transcription activator which binds specifically to the MEF2 element present in the regulatory regions of many muscle-specific genes. Controls cardiac morphogenesis and myogenesis, and is also involved in vascular development. Enhances transcriptional activation mediated by SOX18. Plays an essential role in hippocampal-dependent learning and memory by suppressing the number of excitatory synapses and thus regulating basal and evoked synaptic transmission. Crucial for normal neuronal development, distribution, and electrical activity in the neocortex. Necessary for proper development of megakaryocytes and platelets and for bone marrow B-lymphopoiesis. Required for B-cell survival and proliferation in response to BCR stimulation, efficient IgG1 antibody responses to T-cell-dependent antigens and for normal induction of germinal center B-cells. May also be involved in neurogenesis and in the development of cortical architecture. This Bos taurus (Bovine) protein is Myocyte-specific enhancer factor 2C.